The primary structure comprises 126 residues: Adenosine 5'-monophosphoramidase HINT1 (126 aa).

Position 2 is an N-acetylalanine (alanine 2). An HIT domain is found at 18–126; the sequence is IFGKIIRKEI…GGRQMNWPPG (109 aa). An N6-acetyllysine mark is found at lysine 21 and lysine 30. Position 43–44 (43–44) interacts with AMP; that stretch reads DI. A phosphoserine mark is found at serine 45 and serine 72. AMP contacts are provided by residues asparagine 99, 105 to 107, and 112 to 114; these read GQS and HLH. The Histidine triad motif motif lies at 110 to 114; sequence HVHLH. Histidine 112 (tele-AMP-histidine intermediate) is an active-site residue.

Belongs to the HINT family. Homodimer. Interacts with CDK7. Interacts with RUVBL1 and RUVBL2 and is associated with the LEF1/TCF1-CTNNB1 complex and with a KAT5 histone acetyltransferase complex. Identified in a complex with MITF and CTNNB1. Interacts with CDC34 and RBX1, and is part of a SCF (SKP2-CUL1-F-box protein) E3 ubiquitin-protein ligase complex. Interacts with SUMO1, SUMO2 and RGS17. Interacts with the Ten-1 ICD form of TENM1. Interacts with CALM1; interaction increases in the presence of calcium ions. In terms of tissue distribution, widely expressed.

It localises to the cytoplasm. The protein localises to the nucleus. The enzyme catalyses adenosine 5'-phosphoramidate + H2O = AMP + NH4(+). Exhibits adenosine 5'-monophosphoramidase activity, hydrolyzing purine nucleotide phosphoramidates with a single phosphate group such as adenosine 5'monophosphoramidate (AMP-NH2) to yield AMP and NH2. Hydrolyzes adenosine 5'monophosphomorpholidate (AMP-morpholidate) and guanosine 5'monophosphomorpholidate (GMP-morpholidate). Hydrolyzes lysyl-AMP (AMP-N-epsilon-(N-alpha-acetyl lysine methyl ester)) generated by lysine tRNA ligase. Hydrolyzes Met-AMP, His-AMP, Asp-AMP, lysyl-GMP (GMP-N-epsilon-(N-alpha-acetyl lysine methyl ester)) and AMP-N-alanine methyl ester. Can also convert adenosine 5'-O-phosphorothioate and guanosine 5'-O-phosphorothioate to the corresponding nucleoside 5'-O-phosphates with concomitant release of hydrogen sulfide. In addition, functions as a scaffolding protein that modulates transcriptional activation by the LEF1/TCF1-CTNNB1 complex and by the complex formed with MITF and CTNNB1. Modulates p53/TP53 levels and p53/TP53-mediated apoptosis. Modulates proteasomal degradation of target proteins by the SCF (SKP2-CUL1-F-box protein) E3 ubiquitin-protein ligase complex. Also exhibits SUMO-specific isopeptidase activity, deconjugating SUMO1 from RANGAP1 and RGS17. The polypeptide is Adenosine 5'-monophosphoramidase HINT1 (HINT1) (Oryctolagus cuniculus (Rabbit)).